The sequence spans 69 residues: Cytochrome b-c1 complex subunit 6-1, mitochondrial (69 aa).

2 disulfides stabilise this stretch: C17–C59 and C31–C45.

This sequence belongs to the UQCRH/QCR6 family. In terms of assembly, component of the ubiquinol-cytochrome c oxidoreductase (cytochrome b-c1 complex, complex III, CIII), a multisubunit enzyme composed of 10 subunits. The complex is composed of 3 respiratory subunits cytochrome b (MT-CYB), cytochrome c1 (CYC1-1 or CYC1-2) and Rieske protein (UCR1-1 or UCR1-2), 2 core protein subunits MPPalpha1 (or MPPalpha2) and MPPB, and 5 low-molecular weight protein subunits QCR7-1 (or QCR7-2), UCRQ-1 (or UCRQ-2), QCR9, UCRY and probably QCR6-1 (or QCR6-2). The complex exists as an obligatory dimer and forms supercomplexes (SCs) in the inner mitochondrial membrane with NADH-ubiquinone oxidoreductase (complex I, CI), resulting in different assemblies (supercomplexes SCI(1)III(2) and SCI(2)III(4)).

It is found in the mitochondrion inner membrane. Functionally, component of the ubiquinol-cytochrome c oxidoreductase, a multisubunit transmembrane complex that is part of the mitochondrial electron transport chain which drives oxidative phosphorylation. The respiratory chain contains 3 multisubunit complexes succinate dehydrogenase (complex II, CII), ubiquinol-cytochrome c oxidoreductase (cytochrome b-c1 complex, complex III, CIII) and cytochrome c oxidase (complex IV, CIV), that cooperate to transfer electrons derived from NADH and succinate to molecular oxygen, creating an electrochemical gradient over the inner membrane that drives transmembrane transport and the ATP synthase. The cytochrome b-c1 complex catalyzes electron transfer from ubiquinol to cytochrome c, linking this redox reaction to translocation of protons across the mitochondrial inner membrane, with protons being carried across the membrane as hydrogens on the quinol. In the process called Q cycle, 2 protons are consumed from the matrix, 4 protons are released into the intermembrane space and 2 electrons are passed to cytochrome c. This Arabidopsis thaliana (Mouse-ear cress) protein is Cytochrome b-c1 complex subunit 6-1, mitochondrial (QCR6-1).